We begin with the raw amino-acid sequence, 480 residues long: uncharacterized protein (480 aa).

This is an uncharacterized protein from Xylella fastidiosa (strain 9a5c).